We begin with the raw amino-acid sequence, 284 residues long: MKNIGIAINPSKDYKNTILNMVKEKIKNICNITDIEVYNSFDIKNLNLSSLDLLIVLGGDGTLLGVARELDDDFKAPILGINIGNLGVLSSIEISDLELALKKLMTKDCKVHKRMMLNCEVDINESIKNIKALNEVAVARGTLSRMVKFKIFVDEKLYAIFKGDGLIVSTPTGSTAYSFSAGGPFICPDLEVISIVPICDHTKSMHPIVLKGDSTIKIIAQNGGDQIYLTIDGQRAIEMKDNSVITVKKNPKSLKLLLFNDYDYFKVIRNKVLNNSKECDGEKN.

The active-site Proton acceptor is Asp60. NAD(+) contacts are provided by residues Asp60–Gly61, Asn134–Glu135, Arg145, Lys162, Asp164, Thr175–Ser180, and Gln234.

The protein belongs to the NAD kinase family. A divalent metal cation is required as a cofactor.

It is found in the cytoplasm. The catalysed reaction is NAD(+) + ATP = ADP + NADP(+) + H(+). Its function is as follows. Involved in the regulation of the intracellular balance of NAD and NADP, and is a key enzyme in the biosynthesis of NADP. Catalyzes specifically the phosphorylation on 2'-hydroxyl of the adenosine moiety of NAD to yield NADP. This chain is NAD kinase, found in Clostridium botulinum (strain Eklund 17B / Type B).